The primary structure comprises 573 residues: Solute carrier family 41 member 2 (573 aa).

At 1–162 (MTHSKGRPVT…KESSGVMALQ (162 aa)) the chain is on the extracellular side. Serine 137 and serine 138 each carry phosphoserine. Residues 163–183 (ILVPFLLAGFGTVSAGMVLDI) form a helical membrane-spanning segment. At 184-195 (VQHWEVFKNVTE) the chain is on the cytoplasmic side. Residues 196–216 (VFILVPALLGLKGNLEMTLAS) form a helical membrane-spanning segment. Residues 217 to 245 (RLSTAVNVGKMDSPIEKWNLIIGNLALKQ) are Extracellular-facing. Residues 246–266 (VQATVVGFLAAVAAIILGWIP) form a helical membrane-spanning segment. Topologically, residues 267 to 282 (EGKYYLSHSILLCSSS) are cytoplasmic. The helical transmembrane segment at 283–303 (VATAFIASLLQGIIMVGVIVG) threads the bilayer. The Extracellular portion of the chain corresponds to 304-313 (SKKTGINPDN). Residues 314–334 (VATPIAASFGDLITLAILAWI) form a helical membrane-spanning segment. The Cytoplasmic portion of the chain corresponds to 335–347 (SQGLYSCLETYYY). The helical transmembrane segment at 348–368 (ISPLVCAFFLALTPIWIIIAA) threads the bilayer. Topologically, residues 369 to 376 (KHPATRTV) are extracellular. The chain crosses the membrane as a helical span at residues 377–397 (LHSGWEPVITAMVISSIGGLI). The Cytoplasmic portion of the chain corresponds to 398–406 (LDTTVSDPN). Residues 407 to 427 (LVGIVVYTPVINGIGGNLVAI) form a helical membrane-spanning segment. Residues 428–469 (QASRISTYLHLHSIPGELPEEPKGCSYPFRTFFGSGVNNKSA) are Extracellular-facing. Residues 470–490 (QVLLLFVIPGHLIFLYTIHLM) traverse the membrane as a helical segment. Residues 491–498 (KSGHTSLT) are Cytoplasmic-facing. Residues 499 to 519 (VVFVVVYLFAAVLQVFTLLWI) form a helical membrane-spanning segment. Residues 520–543 (ADWMVHRFWRKGKDPDSFSIPYLT) lie on the Extracellular side of the membrane. A helical membrane pass occupies residues 544–564 (ALGDLLGTALLALSFHFLWLI). At 565-573 (GDRDGDVGD) the chain is on the cytoplasmic side.

This sequence belongs to the SLC41A transporter family.

It is found in the cell membrane. It carries out the reaction Mg(2+)(in) = Mg(2+)(out). The enzyme catalyses Mn(2+)(in) = Mn(2+)(out). It catalyses the reaction Co(2+)(in) = Co(2+)(out). The catalysed reaction is Ni(2+)(in) = Ni(2+)(out). It carries out the reaction Fe(2+)(in) = Fe(2+)(out). Acts as a plasma-membrane magnesium transporter. Can also mediate the transport of other divalent metal cations in an order of Ba(2+) &gt; Ni(2+) &gt; Co(2+) &gt; Fe(2+) &gt; Mn(2+). The sequence is that of Solute carrier family 41 member 2 (Slc41a2) from Mus musculus (Mouse).